The primary structure comprises 123 residues: Holo-[acyl-carrier-protein] synthase (123 aa).

Mg(2+) contacts are provided by D8 and E56.

The protein belongs to the P-Pant transferase superfamily. AcpS family. It depends on Mg(2+) as a cofactor.

It is found in the cytoplasm. It carries out the reaction apo-[ACP] + CoA = holo-[ACP] + adenosine 3',5'-bisphosphate + H(+). Transfers the 4'-phosphopantetheine moiety from coenzyme A to a Ser of acyl-carrier-protein. This is Holo-[acyl-carrier-protein] synthase from Clostridium botulinum (strain Alaska E43 / Type E3).